A 403-amino-acid chain; its full sequence is Serine/threonine transporter SstT (403 aa).

The next 9 membrane-spanning stretches (helical) occupy residues 14 to 34 (VTQI…APAI), 44 to 64 (VFVS…VMAS), 79 to 99 (ILWL…FASM), 138 to 158 (ALLN…GVAL), 175 to 195 (GVTL…FGLV), 214 to 234 (LAVL…LIVF), 295 to 315 (MAGA…TLGI), 327 to 347 (VVAA…LLLI), and 353 to 373 (LFGI…IIGV).

This sequence belongs to the dicarboxylate/amino acid:cation symporter (DAACS) (TC 2.A.23) family.

It is found in the cell inner membrane. The enzyme catalyses L-serine(in) + Na(+)(in) = L-serine(out) + Na(+)(out). It carries out the reaction L-threonine(in) + Na(+)(in) = L-threonine(out) + Na(+)(out). In terms of biological role, involved in the import of serine and threonine into the cell, with the concomitant import of sodium (symport system). This is Serine/threonine transporter SstT from Pseudomonas putida (strain ATCC 47054 / DSM 6125 / CFBP 8728 / NCIMB 11950 / KT2440).